The chain runs to 202 residues: Large ribosomal subunit protein bL9 (202 aa).

A disordered region spans residues 177–202 (AGEFFDPEAEPDDVAEAGGEQTAEEK). Residues 181-191 (FDPEAEPDDVA) are compositionally biased toward acidic residues.

Belongs to the bacterial ribosomal protein bL9 family.

Its function is as follows. Binds to the 23S rRNA. The protein is Large ribosomal subunit protein bL9 of Nitrobacter hamburgensis (strain DSM 10229 / NCIMB 13809 / X14).